The chain runs to 207 residues: Large ribosomal subunit protein uL3 (207 aa).

Belongs to the universal ribosomal protein uL3 family. Part of the 50S ribosomal subunit. Forms a cluster with proteins L14 and L19.

Its function is as follows. One of the primary rRNA binding proteins, it binds directly near the 3'-end of the 23S rRNA, where it nucleates assembly of the 50S subunit. The chain is Large ribosomal subunit protein uL3 from Desulforapulum autotrophicum (strain ATCC 43914 / DSM 3382 / VKM B-1955 / HRM2) (Desulfobacterium autotrophicum).